The primary structure comprises 105 residues: Urease subunit beta (105 aa).

It belongs to the urease beta subunit family. As to quaternary structure, heterotrimer of UreA (gamma), UreB (beta) and UreC (alpha) subunits. Three heterotrimers associate to form the active enzyme.

It localises to the cytoplasm. It carries out the reaction urea + 2 H2O + H(+) = hydrogencarbonate + 2 NH4(+). It functions in the pathway nitrogen metabolism; urea degradation; CO(2) and NH(3) from urea (urease route): step 1/1. The polypeptide is Urease subunit beta (Pseudomonas putida (strain W619)).